The primary structure comprises 288 residues: MAYCNSKTDLSRVPLLALNMGFRKKVGLYLNPRNAVAADWMALAEALGFTFLEIKNYESAINPTVKVLEDWQARSTDATVGKLLSILSEVERNDVLEDLQPMIDEDVRRYCERLNRDPEPPVQVNQVDSCFHRTLERVGLTLHDDPEGTPELFDAFICYCQRDFEFVQEMIRQLEETDFKLKLCVFDRDVLPGSCVWTITSELIEKRCKRMVVVISDEYLDSEACDFQTKFALSLSPGARNKRLIPVKYKSMSKPFPSILRFLTLCDYTRPCTQAWFWKRLAKALSLP.

The Death domain maps to Lys-25–Ile-103. The segment at Asp-104–Gly-148 is intermediate domain. In terms of domain architecture, TIR spans Glu-151–Leu-285.

The protein resides in the cytoplasm. Its function is as follows. Adapter protein involved in the Toll-like receptor and IL-1 receptor signaling pathway in the innate immune response. This chain is Myeloid differentiation primary response protein MyD88 (myd88), found in Takifugu rubripes (Japanese pufferfish).